The sequence spans 147 residues: Large ribosomal subunit protein bL9 (147 aa).

Belongs to the bacterial ribosomal protein bL9 family.

Functionally, binds to the 23S rRNA. This Trichlorobacter lovleyi (strain ATCC BAA-1151 / DSM 17278 / SZ) (Geobacter lovleyi) protein is Large ribosomal subunit protein bL9.